The primary structure comprises 886 residues: MSEILKNDVDPIETQDWLQSLDSLIREEGVERAQYIVEQVIGQARTSGVSLPTGVTTDYVNTIPVAEQPAYPGDHAIERRIRSAVRWNAIAMVLRSQKKDLDLGGHISTFQSAATMYEVCYNHFFKAATEKNGGDLIFFQGHAAPGMYARAFLEGRLTEEQMDNFRQEAFTDGLSSYPHPKLMPEFWQFSTVSMGLGPVNAIYQARFLKYLDNRGLKDTKDQKVYAFLGDGEMDEIESKGALTFAAREHLDNLIFTISCNLQRLDGPVNGNGKIVQELEGLFTGAGWEVIKVLWGSDWDKLFAKDTSGKLTQLMMEVVDGDYLTFKSKDGAYIREHFFGRYPETAALVADMTDDEIWALRRGAHDSEKLYAAYAKAQNATKPVVILAHQVKGYKIPEAESKNTAHQSKKMSYESLKGFRDFFELPLTDEQVEKLEYIKFAEGTPEYEYLHGHRKALNGYVPARRTKFDVEYKVPALEEFKALLEEQPRGISTTMAFTRALNILLKDKNIGKTIVPMIADEARTFGMEGLFRQVGIYNPHGQNYIPSDRDLVAYYREAKDGQVLQEGINELGATASWLAAANSYSVNNQPMIPFFIYYSMFGFQRVGDMMWAAGDQLARGFMVGGTSGRTTLNGEGLQHEDGHSHIQAGIIPNCITYDPSFAFEVAVIMQDGINRMYGEKQEDVFYYMTTLNEVMDQPAMPAGAEEGIRKGLYKFETVEGKKGKGHVQLLGSGAIMRHVREAAQILANDYGVTSDVFSAPSFNELAREGHDAARWNLLHPTETQRVPYVAQVLADLPTVASTDYVKGYADQIRAFVPSKHYHVLGTDGFGRSDSRANLREHFEVDARYVVVAALSQLAKEGTVSNQVVADAIAKFGLNVDRINPLYA.

As to quaternary structure, homodimer. Part of the PDH complex, consisting of multiple copies of pyruvate dehydrogenase (E1), dihydrolipoamide acetyltransferase (E2) and lipoamide dehydrogenase (E3). Requires thiamine diphosphate as cofactor.

It carries out the reaction N(6)-[(R)-lipoyl]-L-lysyl-[protein] + pyruvate + H(+) = N(6)-[(R)-S(8)-acetyldihydrolipoyl]-L-lysyl-[protein] + CO2. Component of the pyruvate dehydrogenase (PDH) complex, that catalyzes the overall conversion of pyruvate to acetyl-CoA and CO(2). This is Pyruvate dehydrogenase E1 component (aceE) from Haemophilus influenzae (strain ATCC 51907 / DSM 11121 / KW20 / Rd).